Consider the following 429-residue polypeptide: MADNDSISVRISEDCPPEIQRMLTAAWAHDVDTVKKLIDTPEVARGQDPKTGESPLHAAIRSCGAPSEDDTPEDHEKAKATVSELLMWGAIWNDVDNNNETPGCVAARLNRPELYELCVNAGVRAEMLFGLMDGYEALDSDDEDDEEMAEGEEAQAEDGEEAPELVAAEEATQTAEEETPAVFQPPAVNLEEQVTSDKYLRSTVAYSDGKLVDDAGNGVMMAWETDIMRRSVDALLPNKEPGKRILNIGFGMGIIDGMFAETKPAVHHIIEAHPEVLEYISTPESKFDSTWEESGPAPGAYRVWEGKWQQIGLQLLEEGHVYDAIYFDTFGEDYGQLRMFFTEYIPGLLDSNGIFGFFNGLGADRQICYDVYTKVAEMHLADAGLDVEWKEIPVDMKELAEADKDGWEGVKRRYWTLDTYRLPVCTFLG.

Disordered stretches follow at residues 41 to 76 (PEVA…EDHE) and 137 to 180 (ALDS…EETP). The segment covering 137–163 (ALDSDDEDDEEMAEGEEAQAEDGEEAP) has biased composition (acidic residues). A compositionally biased stretch (low complexity) spans 164-174 (ELVAAEEATQT). One can recognise an RMT2 domain in the interval 190–429 (LEEQVTSDKY…YRLPVCTFLG (240 aa)). Residues Tyr-199, Met-228, 250–255 (FGMGII), 271–273 (EAH), 308–309 (WQ), and Asp-328 each bind S-adenosyl-L-methionine.

It belongs to the class I-like SAM-binding methyltransferase superfamily. RMT2 methyltransferase family. In terms of assembly, monomer.

Its subcellular location is the cytoplasm. It is found in the nucleus. In terms of biological role, S-adenosyl-L-methionine-dependent protein-arginine N-methyltransferase that methylates the delta-nitrogen atom of arginine residues to form N5-methylarginine (type IV) in target proteins. Monomethylates ribosomal protein L12. The sequence is that of Protein arginine N-methyltransferase 2 from Neurospora crassa (strain ATCC 24698 / 74-OR23-1A / CBS 708.71 / DSM 1257 / FGSC 987).